We begin with the raw amino-acid sequence, 132 residues long: Small ribosomal subunit protein uS8 (132 aa).

The protein belongs to the universal ribosomal protein uS8 family. In terms of assembly, part of the 30S ribosomal subunit. Contacts proteins S5 and S12.

One of the primary rRNA binding proteins, it binds directly to 16S rRNA central domain where it helps coordinate assembly of the platform of the 30S subunit. The sequence is that of Small ribosomal subunit protein uS8 from Nitrobacter winogradskyi (strain ATCC 25391 / DSM 10237 / CIP 104748 / NCIMB 11846 / Nb-255).